A 394-amino-acid polypeptide reads, in one-letter code: 4-hydroxyphenylpyruvate dioxygenase (394 aa).

VOC domains lie at 18–149 (SFHH…LLEY) and 181–339 (FIDH…IFTK). 3 residues coordinate Fe cation: H184, H267, and E350.

Belongs to the 4HPPD family. Homodimer. Fe cation serves as cofactor.

It localises to the cytoplasm. The protein localises to the endoplasmic reticulum membrane. Its subcellular location is the golgi apparatus membrane. It carries out the reaction 3-(4-hydroxyphenyl)pyruvate + O2 = homogentisate + CO2. The protein operates within amino-acid degradation; L-phenylalanine degradation; acetoacetate and fumarate from L-phenylalanine: step 3/6. Catalyzes the conversion of 4-hydroxyphenylpyruvic acid to homogentisic acid, one of the steps in tyrosine catabolism. This Xenopus tropicalis (Western clawed frog) protein is 4-hydroxyphenylpyruvate dioxygenase (hpd).